Here is a 224-residue protein sequence, read N- to C-terminus: Large ribosomal subunit protein uL3 (224 aa).

An N5-methylglutamine modification is found at glutamine 158.

Belongs to the universal ribosomal protein uL3 family. As to quaternary structure, part of the 50S ribosomal subunit. Forms a cluster with proteins L14 and L19. Post-translationally, methylated by PrmB.

Its function is as follows. One of the primary rRNA binding proteins, it binds directly near the 3'-end of the 23S rRNA, where it nucleates assembly of the 50S subunit. This is Large ribosomal subunit protein uL3 from Acidovorax sp. (strain JS42).